Here is a 456-residue protein sequence, read N- to C-terminus: Hydroxyproline dehydrogenase (456 aa).

2 positions are modified to N6-acetyllysine: K310 and K320.

The protein belongs to the proline oxidase family. Requires FAD as cofactor.

It catalyses the reaction trans-4-hydroxy-L-proline + a quinone = (3R,5S)-1-pyrroline-3-hydroxy-5-carboxylate + a quinol + H(+). The enzyme catalyses L-proline + a quinone = (S)-1-pyrroline-5-carboxylate + a quinol + H(+). Dehydrogenase that converts trans-4-L-hydroxyproline to delta-1-pyrroline-3-hydroxy-5-carboxylate (Hyp) using ubiquinone-10 as the terminal electron acceptor. Can also use proline as a substrate but with a very much lower efficiency. Does not react with other diastereomers of Hyp: trans-4-D-hydroxyproline and cis-4-L-hydroxyproline. Ubiquininone analogs such as menadione, duroquinone and ubiquinone-1 react more efficiently than oxygen as the terminal electron acceptor during catalysis. The polypeptide is Hydroxyproline dehydrogenase (Mus musculus (Mouse)).